A 314-amino-acid polypeptide reads, in one-letter code: Ribosomal protein L11 methyltransferase (314 aa).

The S-adenosyl-L-methionine site is built by Thr-161, Gly-182, Asp-204, and Asn-248.

It belongs to the methyltransferase superfamily. PrmA family.

Its subcellular location is the cytoplasm. The enzyme catalyses L-lysyl-[protein] + 3 S-adenosyl-L-methionine = N(6),N(6),N(6)-trimethyl-L-lysyl-[protein] + 3 S-adenosyl-L-homocysteine + 3 H(+). Functionally, methylates ribosomal protein L11. The sequence is that of Ribosomal protein L11 methyltransferase from Listeria welshimeri serovar 6b (strain ATCC 35897 / DSM 20650 / CCUG 15529 / CIP 8149 / NCTC 11857 / SLCC 5334 / V8).